Reading from the N-terminus, the 370-residue chain is Neutral protease 2 homolog AFUA_4G13750 (370 aa).

An N-terminal signal peptide occupies residues 1–19 (MKVTILASAILALINGALA). Positions 20 to 172 (LPANTPTLDV…PQAIKLLDRR (153 aa)) are excised as a propeptide. 2 disulfide bridges follow: Cys-178–Cys-250 and Cys-257–Cys-275. Residue His-300 participates in Zn(2+) binding. Residue Glu-301 is part of the active site. Zn(2+) contacts are provided by His-304 and Asp-315.

The protein belongs to the peptidase M35 family. Zn(2+) is required as a cofactor.

The protein resides in the secreted. It carries out the reaction Preferential cleavage of bonds with hydrophobic residues in P1'. Also 3-Asn-|-Gln-4 and 8-Gly-|-Ser-9 bonds in insulin B chain.. Secreted metalloproteinase that allows assimilation of proteinaceous substrates. Shows high activities on basic nuclear substrates such as histone and protamine. May be involved in virulence. This is Neutral protease 2 homolog AFUA_4G13750 from Aspergillus fumigatus (strain ATCC MYA-4609 / CBS 101355 / FGSC A1100 / Af293) (Neosartorya fumigata).